A 160-amino-acid polypeptide reads, in one-letter code: Nucleotide-binding protein VP1617 (160 aa).

This sequence belongs to the YajQ family.

Nucleotide-binding protein. The polypeptide is Nucleotide-binding protein VP1617 (Vibrio parahaemolyticus serotype O3:K6 (strain RIMD 2210633)).